A 676-amino-acid chain; its full sequence is UvrABC system protein B (676 aa).

The region spanning 39-424 is the Helicase ATP-binding domain; sequence RGILDGIPSQ…RGHIIEQIIR (386 aa). 52–59 contacts ATP; the sequence is GTTGSGKT. The short motif at 105-128 is the Beta-hairpin element; sequence YYDYYQPEAYIARSDTYIEKSLLI. Positions 441–604 constitute a Helicase C-terminal domain; sequence QIDDLLEEIR…ITPKPIIKPI (164 aa). The interval 611-631 is disordered; the sequence is KEGAQEDSRPETQSTEDLESS. The region spanning 629–664 is the UVR domain; that stretch reads ESSIKQYEEAMYKAAQDFQFDEAAKYRDLMNAAKRQ.

This sequence belongs to the UvrB family. As to quaternary structure, forms a heterotetramer with UvrA during the search for lesions. Interacts with UvrC in an incision complex.

The protein localises to the cytoplasm. In terms of biological role, the UvrABC repair system catalyzes the recognition and processing of DNA lesions. A damage recognition complex composed of 2 UvrA and 2 UvrB subunits scans DNA for abnormalities. Upon binding of the UvrA(2)B(2) complex to a putative damaged site, the DNA wraps around one UvrB monomer. DNA wrap is dependent on ATP binding by UvrB and probably causes local melting of the DNA helix, facilitating insertion of UvrB beta-hairpin between the DNA strands. Then UvrB probes one DNA strand for the presence of a lesion. If a lesion is found the UvrA subunits dissociate and the UvrB-DNA preincision complex is formed. This complex is subsequently bound by UvrC and the second UvrB is released. If no lesion is found, the DNA wraps around the other UvrB subunit that will check the other stand for damage. The protein is UvrABC system protein B of Chlamydia muridarum (strain MoPn / Nigg).